We begin with the raw amino-acid sequence, 346 residues long: Elongation factor Ts (346 aa).

The involved in Mg(2+) ion dislocation from EF-Tu stretch occupies residues 80 to 83 (TDFV).

The protein belongs to the EF-Ts family.

It localises to the cytoplasm. Its function is as follows. Associates with the EF-Tu.GDP complex and induces the exchange of GDP to GTP. It remains bound to the aminoacyl-tRNA.EF-Tu.GTP complex up to the GTP hydrolysis stage on the ribosome. The polypeptide is Elongation factor Ts (Streptococcus pneumoniae (strain 70585)).